The chain runs to 363 residues: Protein-glutamate methylesterase/protein-glutamine glutaminase 1 (363 aa).

Residues 7–124 (KVLIVDDSAL…SRGMQEYARE (118 aa)) form the Response regulatory domain. Position 58 is a 4-aspartylphosphate (Asp58). The 193-residue stretch at 164–356 (FSSTEKIIVI…RRLFGWLESQ (193 aa)) folds into the CheB-type methylesterase domain. Residues Ser176, His202, and Asp298 contribute to the active site.

Belongs to the CheB family. Post-translationally, phosphorylated by CheA. Phosphorylation of the N-terminal regulatory domain activates the methylesterase activity.

The protein resides in the cytoplasm. It carries out the reaction [protein]-L-glutamate 5-O-methyl ester + H2O = L-glutamyl-[protein] + methanol + H(+). The catalysed reaction is L-glutaminyl-[protein] + H2O = L-glutamyl-[protein] + NH4(+). Its function is as follows. Involved in chemotaxis. Part of a chemotaxis signal transduction system that modulates chemotaxis in response to various stimuli. Catalyzes the demethylation of specific methylglutamate residues introduced into the chemoreceptors (methyl-accepting chemotaxis proteins or MCP) by CheR. Also mediates the irreversible deamidation of specific glutamine residues to glutamic acid. In Geobacter metallireducens (strain ATCC 53774 / DSM 7210 / GS-15), this protein is Protein-glutamate methylesterase/protein-glutamine glutaminase 1.